Reading from the N-terminus, the 167-residue chain is E1B protein, small T-antigen (167 aa).

Residues 143-167 (GLDPVQEEEEEEENLRAGLDPSTEL) are disordered.

It belongs to the adenoviridae E1B 19 kDa protein family.

The protein localises to the host cell membrane. It localises to the host nucleus envelope. The protein resides in the host nucleus lamina. Putative adenovirus Bcl-2 homolog that inhibits apoptosis induced by TNF or FAS pathways, as well as p53-mediated apoptosis. Without E1B 19K function, virus production is compromised because of premature death of host cell. Interacts with Bax protein in cell lysates. This chain is E1B protein, small T-antigen, found in Human adenovirus F serotype 40 (HAdV-40).